The primary structure comprises 91 residues: Small ribosomal subunit protein bS20 (91 aa).

Residues 1 to 28 (MPNIKSAIKRTKTIEKRRAHRASQKSDL) form a disordered region. Basic residues predominate over residues 7-23 (AIKRTKTIEKRRAHRAS).

The protein belongs to the bacterial ribosomal protein bS20 family.

In terms of biological role, binds directly to 16S ribosomal RNA. The sequence is that of Small ribosomal subunit protein bS20 from Brevibacillus brevis (strain 47 / JCM 6285 / NBRC 100599).